Reading from the N-terminus, the 590-residue chain is Conglutin beta 4 (590 aa).

Residues methionine 1–glycine 30 form the signal peptide. Positions histidine 38–glutamate 105 are enriched in basic and acidic residues. Residues histidine 38–tyrosine 175 form a disordered region. Residues glutamine 137 to glutamine 146 show a composition bias toward low complexity. Residues tyrosine 174–glutamine 332 form the Cupin type-1 1 domain. Asparagine 239 is a glycosylation site (N-linked (GlcNAc...) asparagine). Disordered stretches follow at residues aspartate 340–valine 362 and lysine 374–asparagine 396. The segment covering glutamate 346–valine 362 has biased composition (basic and acidic residues). The Cupin type-1 2 domain maps to phenylalanine 391–glutamate 548. N-linked (GlcNAc...) asparagine glycosylation is present at asparagine 498. Residues phenylalanine 559 to arginine 579 form a disordered region.

It belongs to the 7S seed storage protein family. Component of globulins complexes which accumulate in seeds.

In terms of biological role, seed storage protein. Accumulates during seed development and is hydrolyzed after germination to provide a carbon and nitrogen source for the developing seedling. This is Conglutin beta 4 from Lupinus angustifolius (Narrow-leaved blue lupine).